We begin with the raw amino-acid sequence, 108 residues long: uncharacterized protein (108 aa).

2 helical membrane-spanning segments follow: residues 32-52 and 68-88; these read YFFF…LLAI and SYLL…LVVG.

The protein resides in the membrane. This is an uncharacterized protein from Saccharomyces cerevisiae (strain ATCC 204508 / S288c) (Baker's yeast).